The following is a 418-amino-acid chain: Beta-arrestin-1 (418 aa).

Residues 1-163 (MGDKGTRVFK…LEEKIHKRNS (163 aa)) are interaction with SRC. An interaction with CHRM2 region spans residues 45-86 (PEYLKERRVYVTLTCAFRYGREDLDVLGLTFRKDLFVANVQS). Tyr-47 bears the Phosphotyrosine mark. 1D-myo-inositol hexakisphosphate contacts are provided by Lys-250, Met-255, Lys-324, and Lys-326. Residues 318 to 418 (IVSYKVKVKL…GTGSPHLNNR (101 aa)) are interaction with TRAF6. 2 disordered regions span residues 353-375 (HPKPKEEPPHREVPESETPVDTN) and 397-418 (KGMKDDKDEEDDGTGSPHLNNR). Positions 355 to 366 (KPKEEPPHREVP) are enriched in basic and acidic residues. A Phosphoserine modification is found at Ser-412.

This sequence belongs to the arrestin family. In terms of assembly, monomer. Homodimer. Homooligomer; the self-association is mediated by InsP6-binding. Heterooligomer with ARRB2; the association is mediated by InsP6-binding. Interacts with ADRB2 (phosphorylated). Interacts with CHRM2 (phosphorylated). Interacts with LHCGR. Interacts with CYTH2 and CASR. Interacts with AP2B1 (dephosphorylated); phosphorylation of AP2B1 disrupts the interaction. Interacts (dephosphorylated at Ser-412) with CLTC. Interacts with CCR2 and GRK2. Interacts with CRR5. Interacts with PTAFR (phosphorylated on serine residues). Interacts with CLTC and MAP2K3. Interacts with CREB1. Interacts with TRAF6. Interacts with IGF1R and MDM2. Interacts with C5AR1. Interacts with PDE4D. Interacts with SRC (via the SH3 domain and the protein kinase domain); the interaction is independent of the phosphorylation state of SRC C-terminus. Interacts with TACR1. Interacts with RAF1. Interacts with DVL1; the interaction is enhanced by phosphorylation of DVL1. Interacts with DVL2; the interaction is enhanced by phosphorylation of DVL2. Interacts with IGF1R. Interacts with CHUK, IKBKB and MAP3K14. Associates with MAP kinase p38. Part of a MAPK signaling complex consisting of TACR1, ARRB1, SRC, MAPK1 (activated) and MAPK3 (activated). Part of a MAPK signaling complex consisting of F2RL1, ARRB1, RAF1, MAPK1 (activated) and MAPK3 (activated). Interacts with GPR143. Interacts with MAP2K4/MKK4. Interacts with HCK and CXCR1 (phosphorylated). Interacts with ACKR3 and ACKR4. Interacts with ARRDC1; the interaction is direct. Interacts with GPR61, GPR62 and GPR135. In terms of processing, constitutively phosphorylated at in the cytoplasm. At the plasma membrane, is rapidly dephosphorylated, a process that is required for clathrin binding and ADRB2 endocytosis but not for ADRB2 binding and desensitization. Once internalized, is rephosphorylated. Post-translationally, the ubiquitination status appears to regulate the formation and trafficking of beta-arrestin-GPCR complexes and signaling. Ubiquitination appears to occur GPCR-specific. Ubiquitinated by MDM2; the ubiquitination is required for rapid internalization of ADRB2. Deubiquitinated by USP33; the deubiquitination leads to a dissociation of the beta-arrestin-GPCR complex. Stimulation of a class A GPCR, such as ADRB2, induces transient ubiquitination and subsequently promotes association with USP33.

Its subcellular location is the cytoplasm. It localises to the nucleus. It is found in the cell membrane. The protein resides in the membrane. The protein localises to the clathrin-coated pit. Its subcellular location is the cell projection. It localises to the pseudopodium. It is found in the cytoplasmic vesicle. Its function is as follows. Functions in regulating agonist-mediated G-protein coupled receptor (GPCR) signaling by mediating both receptor desensitization and resensitization processes. During homologous desensitization, beta-arrestins bind to the GPRK-phosphorylated receptor and sterically preclude its coupling to the cognate G-protein; the binding appears to require additional receptor determinants exposed only in the active receptor conformation. The beta-arrestins target many receptors for internalization by acting as endocytic adapters (CLASPs, clathrin-associated sorting proteins) and recruiting the GPRCs to the adapter protein 2 complex 2 (AP-2) in clathrin-coated pits (CCPs). However, the extent of beta-arrestin involvement appears to vary significantly depending on the receptor, agonist and cell type. Internalized arrestin-receptor complexes traffic to intracellular endosomes, where they remain uncoupled from G-proteins. Two different modes of arrestin-mediated internalization occur. Class A receptors, like ADRB2, OPRM1, ENDRA, D1AR and ADRA1B dissociate from beta-arrestin at or near the plasma membrane and undergo rapid recycling. Class B receptors, like AVPR2, AGTR1, NTSR1, TRHR and TACR1 internalize as a complex with arrestin and traffic with it to endosomal vesicles, presumably as desensitized receptors, for extended periods of time. Receptor resensitization then requires that receptor-bound arrestin is removed so that the receptor can be dephosphorylated and returned to the plasma membrane. Involved in internalization of P2RY4 and UTP-stimulated internalization of P2RY2. Involved in phosphorylation-dependent internalization of OPRD1 ands subsequent recycling. Involved in the degradation of cAMP by recruiting cAMP phosphodiesterases to ligand-activated receptors. Beta-arrestins function as multivalent adapter proteins that can switch the GPCR from a G-protein signaling mode that transmits short-lived signals from the plasma membrane via small molecule second messengers and ion channels to a beta-arrestin signaling mode that transmits a distinct set of signals that are initiated as the receptor internalizes and transits the intracellular compartment. Acts as a signaling scaffold for MAPK pathways such as MAPK1/3 (ERK1/2). ERK1/2 activated by the beta-arrestin scaffold is largely excluded from the nucleus and confined to cytoplasmic locations such as endocytic vesicles, also called beta-arrestin signalosomes. Recruits c-Src/SRC to ADRB2 resulting in ERK activation. GPCRs for which the beta-arrestin-mediated signaling relies on both ARRB1 and ARRB2 (codependent regulation) include ADRB2, F2RL1 and PTH1R. For some GPCRs the beta-arrestin-mediated signaling relies on either ARRB1 or ARRB2 and is inhibited by the other respective beta-arrestin form (reciprocal regulation). Inhibits ERK1/2 signaling in AGTR1- and AVPR2-mediated activation (reciprocal regulation). Is required for SP-stimulated endocytosis of NK1R and recruits c-Src/SRC to internalized NK1R resulting in ERK1/2 activation, which is required for the antiapoptotic effects of SP. Is involved in proteinase-activated F2RL1-mediated ERK activity. Acts as a signaling scaffold for the AKT1 pathway. Is involved in alpha-thrombin-stimulated AKT1 signaling. Is involved in IGF1-stimulated AKT1 signaling leading to increased protection from apoptosis. Involved in activation of the p38 MAPK signaling pathway and in actin bundle formation. Involved in F2RL1-mediated cytoskeletal rearrangement and chemotaxis. Involved in AGTR1-mediated stress fiber formation by acting together with GNAQ to activate RHOA. Appears to function as signaling scaffold involved in regulation of MIP-1-beta-stimulated CCR5-dependent chemotaxis. Involved in attenuation of NF-kappa-B-dependent transcription in response to GPCR or cytokine stimulation by interacting with and stabilizing CHUK. May serve as nuclear messenger for GPCRs. Involved in OPRD1-stimulated transcriptional regulation by translocating to CDKN1B and FOS promoter regions and recruiting EP300 resulting in acetylation of histone H4. Involved in regulation of LEF1 transcriptional activity via interaction with DVL1 and/or DVL2 Also involved in regulation of receptors other than GPCRs. Involved in Toll-like receptor and IL-1 receptor signaling through the interaction with TRAF6 which prevents TRAF6 autoubiquitination and oligomerization required for activation of NF-kappa-B and JUN. Involved in IL8-mediated granule release in neutrophils. Binds phosphoinositides. Binds inositolhexakisphosphate (InsP6). Required for atypical chemokine receptor ACKR2-induced RAC1-LIMK1-PAK1-dependent phosphorylation of cofilin (CFL1) and for the up-regulation of ACKR2 from endosomal compartment to cell membrane, increasing its efficiency in chemokine uptake and degradation. Involved in the internalization of the atypical chemokine receptor ACKR3. Negatively regulates the NOTCH signaling pathway by mediating the ubiquitination and degradation of NOTCH1 by ITCH. Participates in the recruitment of the ubiquitin-protein ligase to the receptor. The polypeptide is Beta-arrestin-1 (Arrb1) (Mus musculus (Mouse)).